The sequence spans 527 residues: N-acetylglucosamine-1-phosphodiester alpha-N-acetylglucosaminidase (527 aa).

An N-terminal signal peptide occupies residues 1–25; sequence MASSMGRFLLFFIALRGFLLEASGD. The propeptide at 26-49 is removed in mature form; it reads FGSGASRDDDVLLPYSRARARLAR. At 50 to 463 the chain is on the lumenal side; that stretch reads DCTRVHAGRL…SLLTRTTWLA (414 aa). 5 disulfide bridges follow: Cys116–Cys149, Cys133–Cys324, Cys308–Cys315, Cys363–Cys374, and Cys381–Cys390. Asn209, Asn215, and Asn297 each carry an N-linked (GlcNAc...) asparagine glycan. In terms of domain architecture, EGF-like spans 359–391; it reads DKLDCGPANCSQHGLCTETGCRCEAGWTGSNCS. N-linked (GlcNAc...) asparagine glycosylation is found at Asn367, Asn389, and Asn421. Residues 464-484 traverse the membrane as a helical segment; it reads ITLALAFLLLISTAANVSLFL. Residues 485 to 527 lie on the Cytoplasmic side of the membrane; that stretch reads GSRAARRRHLDGAYVYHPLQEVNGEHPAAEKEQLGDSSNPFKD. A mediates the interaction with AP4M1 region spans residues 498-505; it reads YVYHPLQE. Residues 500 to 503 carry the Tyrosine-based internalization motif motif; sequence YHPL. Residues 523 to 527 carry the NPF internalization motif motif; that stretch reads NPFKD.

In terms of assembly, homotetramer arranged as two disulfide-linked homodimers. Interacts with AP4M1. In terms of processing, glycosylated. Contains complex N-linked oligosaccharides with appreciable amounts of sialic acid. Post-translationally, the precursor is cleaved and activated in the trans-Golgi network by a furin endopeptidase.

It is found in the golgi apparatus. Its subcellular location is the golgi stack membrane. The protein resides in the trans-Golgi network. The enzyme catalyses N(4)-[6-(N-acetyl-alpha-D-glucosaminyl-1-phospho)-alpha-D-mannosyl-(1-&gt;2)-alpha-D-mannosyl-(glycan)]-L-asparaginyl-[protein] + H2O = N(4)-[6-phospho-alpha-D-mannosyl-(1-&gt;2)-alpha-D-mannosyl-(glycan)]-L-asparaginyl-[protein] + N-acetyl-D-glucosamine + H(+). The protein operates within protein modification; protein glycosylation. Functionally, catalyzes the second step in the formation of the mannose 6-phosphate targeting signal on lysosomal enzyme oligosaccharides by removing GlcNAc residues from GlcNAc-alpha-P-mannose moieties, which are formed in the first step. Also hydrolyzes UDP-GlcNAc, a sugar donor for Golgi N-acetylglucosaminyltransferases. The sequence is that of N-acetylglucosamine-1-phosphodiester alpha-N-acetylglucosaminidase (NAGPA) from Bos taurus (Bovine).